The chain runs to 111 residues: MAVKIRLARGGAKKRPFYRVVIANATAPRDGDFLEKVGTYNPMLASDNSERVVLKKDRIEYWLSTGAKPTERVAKFIEKAGVTLPKNVKKEMEVKAKNRKVRPSKKESKES.

Belongs to the bacterial ribosomal protein bS16 family.

In Rickettsia typhi (strain ATCC VR-144 / Wilmington), this protein is Small ribosomal subunit protein bS16.